Consider the following 599-residue polypeptide: Chaperone protein DnaK (599 aa).

At Thr187 the chain carries Phosphothreonine; by autocatalysis. Residues 575-599 are disordered; that stretch reads AQQAATENSKDSDTVEAEIVDDKAN.

It belongs to the heat shock protein 70 family.

In terms of biological role, acts as a chaperone. The sequence is that of Chaperone protein DnaK from Mycoplasmopsis pulmonis (strain UAB CTIP) (Mycoplasma pulmonis).